A 729-amino-acid chain; its full sequence is Monosaccharide-sensing protein 3 (729 aa).

6 helical membrane passes run 5–25, 46–66, 81–101, 104–124, 135–155, and 165–185; these read VLVA…NATI, GLIV…SGPV, VLYF…VLLF, LLDG…ISET, TFPQ…VFGM, and LMLG…AFFL. The disordered stretch occupies residues 337 to 372; it reads QESQWDPERNNEDSSDQDENLNSPLLSPQTTEPDDY. The span at 356-367 shows a compositional bias: polar residues; sequence NLNSPLLSPQTT. The residue at position 446 (S446) is a Phosphoserine. The next 6 helical transmembrane spans lie at 511–531, 557–577, 581–601, 610–630, 650–670, and 673–693; these read ALMV…NGVM, ASLL…LVSM, MLST…GSLV, LIST…FGAI, ICAL…PVML, and IGIA…WVFV.

It belongs to the major facilitator superfamily. Sugar transporter (TC 2.A.1.1) family. In terms of tissue distribution, weakly expressed.

It localises to the vacuole membrane. The enzyme catalyses D-glucose(out) + H(+)(in) = D-glucose(in) + H(+)(out). It catalyses the reaction sucrose(out) + H(+)(in) = sucrose(in) + H(+)(out). In terms of biological role, sugar proton-coupled antiporter which contributes to vacuolar sugar import (e.g. monosaccharides including glucose,sucrose and fructose), particularly during stress responses (e.g. in response to cold). This is Monosaccharide-sensing protein 3 from Arabidopsis thaliana (Mouse-ear cress).